A 435-amino-acid polypeptide reads, in one-letter code: Ribulose bisphosphate carboxylase-like protein (435 aa).

Residues lysine 198, aspartate 200, and glutamate 201 each contribute to the Mg(2+) site. The residue at position 198 (lysine 198) is an N6-carboxylysine.

The protein belongs to the RuBisCO large chain family. Type IV subfamily. Homodimer. It depends on Mg(2+) as a cofactor.

May be involved in sulfur metabolism and oxidative stress response. Does not show RuBisCO activity. The polypeptide is Ribulose bisphosphate carboxylase-like protein (Chlorobaculum tepidum (strain ATCC 49652 / DSM 12025 / NBRC 103806 / TLS) (Chlorobium tepidum)).